A 441-amino-acid chain; its full sequence is Ribosomal protein uS12 methylthiotransferase RimO (441 aa).

An MTTase N-terminal domain is found at 8–118 (PKIGFVSLGC…VLQHVHHYVP (111 aa)). Positions 17, 53, 82, 150, 154, and 157 each coordinate [4Fe-4S] cluster. A Radical SAM core domain is found at 136–373 (LTPRHYAYLK…MQLQQQISAE (238 aa)). One can recognise a TRAM domain in the interval 376–441 (QEKVGREILV…DEYDLWGSRV (66 aa)).

Belongs to the methylthiotransferase family. RimO subfamily. The cofactor is [4Fe-4S] cluster.

It localises to the cytoplasm. It catalyses the reaction L-aspartate(89)-[ribosomal protein uS12]-hydrogen + (sulfur carrier)-SH + AH2 + 2 S-adenosyl-L-methionine = 3-methylsulfanyl-L-aspartate(89)-[ribosomal protein uS12]-hydrogen + (sulfur carrier)-H + 5'-deoxyadenosine + L-methionine + A + S-adenosyl-L-homocysteine + 2 H(+). Its function is as follows. Catalyzes the methylthiolation of an aspartic acid residue of ribosomal protein uS12. The sequence is that of Ribosomal protein uS12 methylthiotransferase RimO from Salmonella arizonae (strain ATCC BAA-731 / CDC346-86 / RSK2980).